Reading from the N-terminus, the 144-residue chain is Large ribosomal subunit protein uL15 (144 aa).

The tract at residues 1-57 (MRLNTLSPAPGSKPSAKRVGRGIGSGLGKTCGRGHKGQKSRSGGSVRPGFEGGQMPL) is disordered. A compositionally biased stretch (gly residues) spans 21–31 (RGIGSGLGKTC).

Belongs to the universal ribosomal protein uL15 family. As to quaternary structure, part of the 50S ribosomal subunit.

In terms of biological role, binds to the 23S rRNA. This is Large ribosomal subunit protein uL15 from Photobacterium profundum (strain SS9).